The chain runs to 228 residues: UPF0758 protein stu1465 (228 aa).

Positions 103–225 constitute an MPN domain; that stretch reads QIMSSQQVAR…YYSFREERED (123 aa). 3 residues coordinate Zn(2+): histidine 174, histidine 176, and aspartate 187. The JAMM motif signature appears at 174–187; that stretch reads HNHPSGEAYPSRND.

Belongs to the UPF0758 family.

The chain is UPF0758 protein stu1465 from Streptococcus thermophilus (strain ATCC BAA-250 / LMG 18311).